We begin with the raw amino-acid sequence, 754 residues long: 5-methyltetrahydropteroyltriglutamate--homocysteine methyltransferase (754 aa).

5-methyltetrahydropteroyltri-L-glutamate is bound by residues 15 to 18 (RELK) and lysine 114. L-homocysteine is bound by residues 430-432 (IGS) and glutamate 483. Residues 430–432 (IGS) and glutamate 483 contribute to the L-methionine site. 5-methyltetrahydropteroyltri-L-glutamate contacts are provided by residues 514–515 (RC) and tryptophan 560. Residue aspartate 598 participates in L-homocysteine binding. Aspartate 598 contacts L-methionine. Residue glutamate 604 participates in 5-methyltetrahydropteroyltri-L-glutamate binding. Residues histidine 641, cysteine 643, and glutamate 665 each contribute to the Zn(2+) site. The active-site Proton donor is histidine 694. Zn(2+) is bound at residue cysteine 726.

This sequence belongs to the vitamin-B12 independent methionine synthase family. Zn(2+) serves as cofactor.

It catalyses the reaction 5-methyltetrahydropteroyltri-L-glutamate + L-homocysteine = tetrahydropteroyltri-L-glutamate + L-methionine. The protein operates within amino-acid biosynthesis; L-methionine biosynthesis via de novo pathway; L-methionine from L-homocysteine (MetE route): step 1/1. Catalyzes the transfer of a methyl group from 5-methyltetrahydrofolate to homocysteine resulting in methionine formation. This is 5-methyltetrahydropteroyltriglutamate--homocysteine methyltransferase from Campylobacter jejuni subsp. jejuni serotype O:2 (strain ATCC 700819 / NCTC 11168).